We begin with the raw amino-acid sequence, 219 residues long: UPF0173 metal-dependent hydrolase Mlab_1154 (219 aa).

It belongs to the UPF0173 family.

The polypeptide is UPF0173 metal-dependent hydrolase Mlab_1154 (Methanocorpusculum labreanum (strain ATCC 43576 / DSM 4855 / Z)).